Here is a 63-residue protein sequence, read N- to C-terminus: ATP synthase F(0) complex subunit 8 (63 aa).

The helical transmembrane segment at 8-24 (TWLLTILSMLLTLFVLF) threads the bilayer. Lysine 57 is subject to N6-acetyllysine.

The protein belongs to the ATPase protein 8 family. Component of the ATP synthase complex composed at least of ATP5F1A/subunit alpha, ATP5F1B/subunit beta, ATP5MC1/subunit c (homooctomer), MT-ATP6/subunit a, MT-ATP8/subunit 8, ATP5ME/subunit e, ATP5MF/subunit f, ATP5MG/subunit g, ATP5MK/subunit k, ATP5MJ/subunit j, ATP5F1C/subunit gamma, ATP5F1D/subunit delta, ATP5F1E/subunit epsilon, ATP5PF/subunit F6, ATP5PB/subunit b, ATP5PD/subunit d, ATP5PO/subunit OSCP. ATP synthase complex consists of a soluble F(1) head domain (subunits alpha(3) and beta(3)) - the catalytic core - and a membrane F(0) domain - the membrane proton channel (subunits c, a, 8, e, f, g, k and j). These two domains are linked by a central stalk (subunits gamma, delta, and epsilon) rotating inside the F1 region and a stationary peripheral stalk (subunits F6, b, d, and OSCP). Interacts with PRICKLE3.

It is found in the mitochondrion membrane. In terms of biological role, subunit 8, of the mitochondrial membrane ATP synthase complex (F(1)F(0) ATP synthase or Complex V) that produces ATP from ADP in the presence of a proton gradient across the membrane which is generated by electron transport complexes of the respiratory chain. ATP synthase complex consist of a soluble F(1) head domain - the catalytic core - and a membrane F(1) domain - the membrane proton channel. These two domains are linked by a central stalk rotating inside the F(1) region and a stationary peripheral stalk. During catalysis, ATP synthesis in the catalytic domain of F(1) is coupled via a rotary mechanism of the central stalk subunits to proton translocation. In vivo, can only synthesize ATP although its ATP hydrolase activity can be activated artificially in vitro. Part of the complex F(0) domain. This Balaenoptera musculus (Blue whale) protein is ATP synthase F(0) complex subunit 8.